Reading from the N-terminus, the 805-residue chain is Angiotensin-converting enzyme 2 (805 aa).

Residues 1 to 17 (MSSSSWLLLSLVAVTAA) form the signal peptide. Residues 18-740 (QSTIEEQAKT…LGPPNQPPVS (723 aa)) lie on the Extracellular side of the membrane. Residues 19-607 (STIEEQAKTF…QNKNSFVGWS (589 aa)) enclose the Peptidase M2 domain. The interval 30–41 (DKFNHEAEDLFY) is interaction with SARS-CoV spike glycoprotein. Residue Asn53 is glycosylated (N-linked (GlcNAc...) asparagine). An interaction with SARS-CoV spike glycoprotein region spans residues 82–84 (MYP). Asn90 and Asn103 each carry an N-linked (GlcNAc...) asparagine glycan. Cys133 and Cys141 are oxidised to a cystine. A chloride-binding site is contributed by Arg169. Arg273 lines the substrate pocket. N-linked (GlcNAc...) asparagine glycosylation occurs at Asn322. Cys344 and Cys361 are disulfide-bonded. 345–346 (HP) contributes to the substrate binding site. Residues 353 to 357 (KGDFR) form an interaction with SARS-CoV spike glycoprotein region. His374 is a binding site for Zn(2+). The active-site Proton acceptor is the Glu375. 2 residues coordinate Zn(2+): His378 and Glu402. Asn432 is a glycosylation site (N-linked (GlcNAc...) asparagine). The chloride site is built by Trp477 and Lys481. Catalysis depends on His505, which acts as the Proton donor. Position 515 (Tyr515) interacts with substrate. A disulfide bridge links Cys530 with Cys542. N-linked (GlcNAc...) asparagine glycosylation occurs at Asn546. One can recognise a Collectrin-like domain in the interval 614–805 (ADQSIKVRIS…QNTDDVQTSF (192 aa)). The essential for cleavage by ADAM17 stretch occupies residues 652 to 659 (RQYFLKVK). Asn690 carries N-linked (GlcNAc...) asparagine glycosylation. An essential for cleavage by TMPRSS11D and TMPRSS2 region spans residues 697-716 (RTEVEKAIRMSRSRINDAFR). A helical transmembrane segment spans residues 741–761 (IWLIVFGVVMGVIVVGIVILI). At 762-805 (FTGIRDRKKKNKARSGENPYASIDISKGENNPGFQNTDDVQTSF) the chain is on the cytoplasmic side. A disordered region spans residues 772-805 (NKARSGENPYASIDISKGENNPGFQNTDDVQTSF). An LIR motif is present at residues 778 to 786 (ENPYASIDI). A Phosphotyrosine modification is found at Tyr781. An Endocytic sorting signal motif is present at residues 781–784 (YASI). The SH2-binding motif lies at 781–785 (YASID). At Ser783 the chain carries Phosphoserine. Residue Lys788 forms a Glycyl lysine isopeptide (Lys-Gly) (interchain with G-Cter in ubiquitin) linkage. Residues 789 to 805 (GENNPGFQNTDDVQTSF) are compositionally biased toward polar residues. The PTB signature appears at 792–795 (NPGF). The short motif at 803–805 (TSF) is the PDZ-binding element.

This sequence belongs to the peptidase M2 family. Homodimer. Interacts with the catalytically active form of TMPRSS2. Interacts with SLC6A19; this interaction is essential for expression and function of SLC6A19 in intestine. Interacts with ITGA5:ITGB1. Probably interacts (via endocytic sorting signal motif) with AP2M1; the interaction is inhibited by phosphorylation of Tyr-781. Interacts (via PDZ-binding motif) with NHERF1 (via PDZ domains); the interaction may enhance ACE2 membrane residence. As to quaternary structure, (Microbial infection) Interacts with SARS coronavirus/SARS-CoV spike protein. In terms of assembly, (Microbial infection) Interacts with SARS coronavirus-2/SARS-CoV-2 spike protein (via RBD domain). (Microbial infection) Interacts with human coronavirus NL63 spike protein. As to quaternary structure, (Microbial infection) Interacts with human coronavirus NL63/HCoV-NL63 spike glycoprotein. In terms of assembly, (Microbial infection) Interacts with SARS coronavirus-2/SARS-CoV-2 spike protein; the interaction is increased by AVP/Arg-vasopressin with which they may form a complex. Zn(2+) serves as cofactor. It depends on chloride as a cofactor. N-glycosylation on Asn-90 may limit SARS infectivity. In terms of processing, proteolytic cleavage by ADAM17 generates a secreted form. Also cleaved by serine proteases: TMPRSS2, TMPRSS11D and HPN/TMPRSS1. Post-translationally, phosphorylated. Phosphorylation at Tyr-781 probably inhibits interaction with AP2M1 and enables interactions with proteins containing SH2 domains. Ubiquitinated. Ubiquitinated on Lys-788 via 'Lys-48'-linked ubiquitin. 'Lys-48'-linked deubiquitinated by USP50 on the Lys-788; leading to its stabilization. Expressed in endothelial cells from small and large arteries, and in arterial smooth muscle cells (at protein level). Expressed in enterocytes of the small intestine, Leydig cells and Sertoli cells (at protein level). Expressed in the renal proximal tubule and the small intestine (at protein level). Expressed in heart, kidney, testis, and gastrointestinal system (at protein level). In lung, expressed at low levels in some alveolar type 2 cells, the expression seems to be individual-specific (at protein level). Expressed in nasal epithelial cells (at protein level). Coexpressed with TMPRSS2 within some lung alveolar type 2 cells, ileal absorptive enterocytes, intestinal epithelial cells, cornea, gallbladder and nasal goblet secretory cells. Coexpressed with TMPRSS4 within mature enterocytes. As to expression, expressed in nasal and bronchial epithelial cells (at protein level).

The protein resides in the secreted. It localises to the cell membrane. The protein localises to the cytoplasm. It is found in the cell projection. Its subcellular location is the cilium. The protein resides in the apical cell membrane. The catalysed reaction is angiotensin II + H2O = angiotensin-(1-7) + L-phenylalanine. The enzyme catalyses angiotensin I + H2O = angiotensin-(1-9) + L-leucine. It carries out the reaction bradykinin(1-8) + H2O = bradykinin(1-7) + L-phenylalanine. It catalyses the reaction neurotensin + H2O = neurotensin-(1-12) + L-leucine. The catalysed reaction is neurotensin-(1-8) + H2O = neurotensin-(1-7) + L-arginine. The enzyme catalyses kinetensin + H2O = kinetensin-(1-8) + L-leucine. It carries out the reaction dynorphin A-(1-13) + H2O = dynorphin A-(1-12) + L-lysine. It catalyses the reaction apelin-13 + H2O = apelin-12 + L-phenylalanine. The catalysed reaction is [Pyr1]apelin-13 + H2O = [Pyr1]apelin-12 + L-phenylalanine. The enzyme catalyses apelin-17 + H2O = apelin-16 + L-phenylalanine. It carries out the reaction beta-casomorphin-7 + H2O = beta-casomorphin-6 + L-isoleucine. It catalyses the reaction neocasomorphin + H2O = neocasomorphin-(1-5) + L-isoleucine. Its activity is regulated as follows. Regulated by chloride and fluoride, but not bromide. Chloride increases angiotensin I and decreases angiotensin II cleavage. Inhibited by MLN-4760, cFP_Leu, and EDTA, but not by the ACE inhibitors lisinopril, captopril and enalaprilat. Highly potent and selective in vitro ACE2 inhibitors were identified. Essential counter-regulatory carboxypeptidase of the renin-angiotensin hormone system that is a critical regulator of blood volume, systemic vascular resistance, and thus cardiovascular homeostasis. Converts angiotensin I to angiotensin 1-9, a nine-amino acid peptide with anti-hypertrophic effects in cardiomyocytes, and angiotensin II to angiotensin 1-7, which then acts as a beneficial vasodilator and anti-proliferation agent, counterbalancing the actions of the vasoconstrictor angiotensin II. Also removes the C-terminal residue from three other vasoactive peptides, neurotensin, kinetensin, and des-Arg bradykinin, but is not active on bradykinin. Also cleaves other biological peptides, such as apelins (apelin-13, [Pyr1]apelin-13, apelin-17, apelin-36), casomorphins (beta-casomorphin-7, neocasomorphin) and dynorphin A with high efficiency. In addition, ACE2 C-terminus is homologous to collectrin and is responsible for the trafficking of the neutral amino acid transporter SL6A19 to the plasma membrane of gut epithelial cells via direct interaction, regulating its expression on the cell surface and its catalytic activity. Its function is as follows. (Microbial infection) Acts as a receptor for human coronaviruses SARS-CoV and SARS-CoV-2, as well as human coronavirus NL63/HCoV-NL63. In terms of biological role, non-functional as a carboxypeptidase. Functionally, (Microbial infection) Non-functional as a receptor for human coronavirus SARS-CoV-2. In Homo sapiens (Human), this protein is Angiotensin-converting enzyme 2.